A 614-amino-acid polypeptide reads, in one-letter code: DNA mismatch repair protein MutL (614 aa).

This sequence belongs to the DNA mismatch repair MutL/HexB family.

Functionally, this protein is involved in the repair of mismatches in DNA. It is required for dam-dependent methyl-directed DNA mismatch repair. May act as a 'molecular matchmaker', a protein that promotes the formation of a stable complex between two or more DNA-binding proteins in an ATP-dependent manner without itself being part of a final effector complex. The polypeptide is DNA mismatch repair protein MutL (Thermoanaerobacter sp. (strain X514)).